Reading from the N-terminus, the 1052-residue chain is Swarming motility protein SwrC (1052 aa).

The protein belongs to the resistance-nodulation-cell division (RND) (TC 2.A.6) family.

Required for self-resistance to surfactin, an antimicrobial lipopeptide surfactant produced by B.subtilis. Also required for swarming motility. The chain is Swarming motility protein SwrC (swrC) from Bacillus subtilis (strain 168).